The chain runs to 449 residues: MLSSQTSSIFTVSRLNQTVRLLLEQEMGQVWISGEISNFTQPASGHWYFTLKDDTAQVRCAMFRNSNRRVTFRPQHGQQVLVRANITLYEPRGDYQVIAESMQPAGEGLLQQKYEQLKAKLQAEGLFDQQHKQPLPSPAHCVGVITSKTGAALHDILHVLKRRDPSLPVIIYPTAVQGDDAPGQIVRAIELANARGECDVLIVGRGGGSLEDLWSFNDERVARAIFASRIPVVSAVGHETDVTIADFVADLRAPTPSAAAEIVSRNQQELLRQIQSAQQRLGMAMDYYLANRSRRFTQIFHRLQQQHPQLRLARQQTALERLRQRMGFALEARIKQANQRQQRVSQRLSQQNPQPRIHRAQSRIQQLEYRLTENIRSRLSEQRERFGNAVTHLEAVSPLATLARGYTVSTTTDGKVLKKIKQVNAGDIMTTRLEDGWLESEVKSVTPGT.

This sequence belongs to the XseA family. In terms of assembly, heterooligomer composed of large and small subunits.

It is found in the cytoplasm. It carries out the reaction Exonucleolytic cleavage in either 5'- to 3'- or 3'- to 5'-direction to yield nucleoside 5'-phosphates.. Functionally, bidirectionally degrades single-stranded DNA into large acid-insoluble oligonucleotides, which are then degraded further into small acid-soluble oligonucleotides. The sequence is that of Exodeoxyribonuclease 7 large subunit from Salmonella paratyphi A (strain ATCC 9150 / SARB42).